The sequence spans 127 residues: Calcitonin receptor-stimulating peptide 1 (127 aa).

The first 25 residues, 1 to 25 (MGFWKFSPFLVLGILALYQVGFLQA), serve as a signal peptide directing secretion. Positions 26–79 (APFRSALENPPDSGVRNEEELRLLLAAVMKDYMQMKTHELEQEQETEGSRVAVQ) are excised as a propeptide. C83 and C88 are joined by a disulfide.

It belongs to the calcitonin family.

The protein resides in the secreted. In terms of biological role, stimulates cAMP production in porcine kidney cell line LLC-PK1 via the calcitonin receptor (CT) but not via the CT-like (CL) receptor. This is Calcitonin receptor-stimulating peptide 1 (CRSP1) from Canis lupus familiaris (Dog).